Reading from the N-terminus, the 97-residue chain is Integration host factor subunit alpha (97 aa).

A disordered region spans residues 50–71; the sequence is FGNFTLRDKPQRPGRNPKTGEE.

This sequence belongs to the bacterial histone-like protein family. As to quaternary structure, heterodimer of an alpha and a beta chain.

Its function is as follows. This protein is one of the two subunits of integration host factor, a specific DNA-binding protein that functions in genetic recombination as well as in transcriptional and translational control. The polypeptide is Integration host factor subunit alpha (Legionella pneumophila (strain Paris)).